Here is a 205-residue protein sequence, read N- to C-terminus: Small ribosomal subunit protein uS4 (205 aa).

The span at 1–16 (MSKRESSKYKIDRRMG) shows a compositional bias: basic and acidic residues. The segment at 1 to 46 (MSKRESSKYKIDRRMGENIWGRPKSPVNRREYGPGQHGQRRKGKLS) is disordered. The region spanning 94-157 (SRLDAIVYRA…KQLVIVLESV (64 aa)) is the S4 RNA-binding domain.

The protein belongs to the universal ribosomal protein uS4 family. Part of the 30S ribosomal subunit. Contacts protein S5. The interaction surface between S4 and S5 is involved in control of translational fidelity.

Its function is as follows. One of the primary rRNA binding proteins, it binds directly to 16S rRNA where it nucleates assembly of the body of the 30S subunit. In terms of biological role, with S5 and S12 plays an important role in translational accuracy. This is Small ribosomal subunit protein uS4 from Rhizobium rhizogenes (strain K84 / ATCC BAA-868) (Agrobacterium radiobacter).